A 151-amino-acid chain; its full sequence is Deoxyuridine 5'-triphosphate nucleotidohydrolase (151 aa).

Residues 70–72 (RSG), Asn-83, 87–89 (LID), and Met-97 contribute to the substrate site.

It belongs to the dUTPase family. In terms of assembly, homotrimer. It depends on Mg(2+) as a cofactor.

It carries out the reaction dUTP + H2O = dUMP + diphosphate + H(+). It functions in the pathway pyrimidine metabolism; dUMP biosynthesis; dUMP from dCTP (dUTP route): step 2/2. In terms of biological role, this enzyme is involved in nucleotide metabolism: it produces dUMP, the immediate precursor of thymidine nucleotides and it decreases the intracellular concentration of dUTP so that uracil cannot be incorporated into DNA. The protein is Deoxyuridine 5'-triphosphate nucleotidohydrolase of Escherichia coli (strain K12 / MC4100 / BW2952).